Here is a 372-residue protein sequence, read N- to C-terminus: 4-hydroxy-3-methylbut-2-en-1-yl diphosphate synthase (flavodoxin) (372 aa).

Residues C270, C273, C305, and E312 each contribute to the [4Fe-4S] cluster site.

Belongs to the IspG family. [4Fe-4S] cluster is required as a cofactor.

It carries out the reaction (2E)-4-hydroxy-3-methylbut-2-enyl diphosphate + oxidized [flavodoxin] + H2O + 2 H(+) = 2-C-methyl-D-erythritol 2,4-cyclic diphosphate + reduced [flavodoxin]. It participates in isoprenoid biosynthesis; isopentenyl diphosphate biosynthesis via DXP pathway; isopentenyl diphosphate from 1-deoxy-D-xylulose 5-phosphate: step 5/6. Converts 2C-methyl-D-erythritol 2,4-cyclodiphosphate (ME-2,4cPP) into 1-hydroxy-2-methyl-2-(E)-butenyl 4-diphosphate. The chain is 4-hydroxy-3-methylbut-2-en-1-yl diphosphate synthase (flavodoxin) from Salmonella choleraesuis (strain SC-B67).